The chain runs to 242 residues: MSKSRLTVFSFVRRFLLRLMVVLAVFWGGGIALFSVAPVPFSAVMAERQVSAWLHGNFRYVAHSDWVSMDQISPWMGLAVIAAEDQKFPEHWGFDVASIEQALAHNERNENRIRGASTISQQTAKNLFLWDGRSWVRKGLEAGLTLGIETVWSKKRILTVYLNIAEFGDGVFGVEAAAQRYFHKPASKLTRSEAALLAAVLPNPLRFKVSAPSGYVRGRQAWILRQMYQLGGESFMQQHQLD.

The chain crosses the membrane as a helical span at residues 19-39 (LMVVLAVFWGGGIALFSVAPV).

The protein belongs to the glycosyltransferase 51 family.

It is found in the cell inner membrane. The enzyme catalyses [GlcNAc-(1-&gt;4)-Mur2Ac(oyl-L-Ala-gamma-D-Glu-L-Lys-D-Ala-D-Ala)](n)-di-trans,octa-cis-undecaprenyl diphosphate + beta-D-GlcNAc-(1-&gt;4)-Mur2Ac(oyl-L-Ala-gamma-D-Glu-L-Lys-D-Ala-D-Ala)-di-trans,octa-cis-undecaprenyl diphosphate = [GlcNAc-(1-&gt;4)-Mur2Ac(oyl-L-Ala-gamma-D-Glu-L-Lys-D-Ala-D-Ala)](n+1)-di-trans,octa-cis-undecaprenyl diphosphate + di-trans,octa-cis-undecaprenyl diphosphate + H(+). It participates in cell wall biogenesis; peptidoglycan biosynthesis. Peptidoglycan polymerase that catalyzes glycan chain elongation from lipid-linked precursors. This Escherichia coli O17:K52:H18 (strain UMN026 / ExPEC) protein is Biosynthetic peptidoglycan transglycosylase.